The chain runs to 243 residues: 4-hydroxy-tetrahydrodipicolinate reductase (243 aa).

Residues 9–14 (GANGKM), 78–80 (GTS), and 104–107 (APNF) each bind NAD(+). His134 functions as the Proton donor/acceptor in the catalytic mechanism. His135 lines the (S)-2,3,4,5-tetrahydrodipicolinate pocket. Lys138 serves as the catalytic Proton donor. 144–145 (GT) serves as a coordination point for (S)-2,3,4,5-tetrahydrodipicolinate.

The protein belongs to the DapB family.

The protein localises to the cytoplasm. The enzyme catalyses (S)-2,3,4,5-tetrahydrodipicolinate + NAD(+) + H2O = (2S,4S)-4-hydroxy-2,3,4,5-tetrahydrodipicolinate + NADH + H(+). It carries out the reaction (S)-2,3,4,5-tetrahydrodipicolinate + NADP(+) + H2O = (2S,4S)-4-hydroxy-2,3,4,5-tetrahydrodipicolinate + NADPH + H(+). Its pathway is amino-acid biosynthesis; L-lysine biosynthesis via DAP pathway; (S)-tetrahydrodipicolinate from L-aspartate: step 4/4. In terms of biological role, catalyzes the conversion of 4-hydroxy-tetrahydrodipicolinate (HTPA) to tetrahydrodipicolinate. The polypeptide is 4-hydroxy-tetrahydrodipicolinate reductase (Legionella pneumophila (strain Paris)).